Consider the following 150-residue polypeptide: Urease accessory protein UreE (150 aa).

Belongs to the UreE family.

The protein localises to the cytoplasm. In terms of biological role, involved in urease metallocenter assembly. Binds nickel. Probably functions as a nickel donor during metallocenter assembly. This Staphylococcus saprophyticus subsp. saprophyticus (strain ATCC 15305 / DSM 20229 / NCIMB 8711 / NCTC 7292 / S-41) protein is Urease accessory protein UreE.